The sequence spans 539 residues: MYESPIILGSKPCTLNIPGMGVLHGLTVLDENGKEKCHRFTGIRYAKPPVGKLRWRRPVTLEDGYDYSGDYNQFKTICPQPFYNNRKNQVRNPDFKYDEDCLFLNIWVPAGEKPAEGWPVLYFIHGGWLQVGNPLHYRQCDPQDLQADGSPAKFILVSPGHRLNLFGFLAGKELLEEDPKSSNFGFWDQRLGLEWTYKHIESFGGNKENIAVGGISAGSYSALFQLIYETYHPEANQIIKRALLLSNGLSVQPKSVEESQIQFNELAQKFGIPLELSSAEKLEKLRAIPFQDLADNILNLRLHTFRAVTDGDFVNPNTFKDIYDGTFGKRIRDSGRELIIGEVNNEHSIYANTNPPKSKEDLFNQVNNYYPEKVTKALLELYPKVPDMEDEKEYLAAIKALFGSIVSDMQVYASTRVLINGLVKGGVPLEKIYRYRIAFRGKFFDKYEPPESLVPHAGDLGLWFYNVVDGILPEEIPIYKAWLKSYGEWMSTGKTDWGTTKTEEYRLLDADGTIKVVDDEKWDWGLKVGRTVAGVFGLN.

The active-site Acyl-ester intermediate is S216.

Belongs to the type-B carboxylesterase/lipase family.

It localises to the cytoplasm. It is found in the nucleus. This is an uncharacterized protein from Schizosaccharomyces pombe (strain 972 / ATCC 24843) (Fission yeast).